Consider the following 1878-residue polypeptide: Breast cancer type 1 susceptibility protein homolog (1878 aa).

Residue Met-1 is modified to N-acetylmethionine. The segment at 24-65 (CPICLELIKEPVSTKCDHIFCKFCMLKLLNQRKGPSQCPLCK) adopts an RING-type zinc-finger fold. Lys-109 participates in a covalent cross-link: Glycyl lysine isopeptide (Lys-Gly) (interchain with G-Cter in SUMO2). Position 114 is a phosphoserine (Ser-114). Lys-298 is covalently cross-linked (Glycyl lysine isopeptide (Lys-Gly) (interchain with G-Cter in SUMO2)). Polar residues predominate over residues 303–318 (NNSKQPGLARSQQSRW). The segment at 303–329 (NNSKQPGLARSQQSRWAESKETCNDRQ) is disordered. A Glycyl lysine isopeptide (Lys-Gly) (interchain with G-Cter in SUMO2) cross-link involves residue Lys-336. A compositionally biased stretch (basic and acidic residues) spans 349 to 365 (ELNKQKPPHSDSPRDSQ). The segment at 349-368 (ELNKQKPPHSDSPRDSQDVP) is disordered. Phosphoserine is present on residues Ser-392, Ser-395, Ser-420, and Ser-431. Glycyl lysine isopeptide (Lys-Gly) (interchain with G-Cter in SUMO2) cross-links involve residues Lys-456, Lys-516, and Lys-581. The tract at residues 548 to 614 (NNGPENETEG…KKNRLRRKSS (67 aa)) is disordered. The segment covering 559–582 (YVQKEKNANPTESLEKESAFRTKT) has biased composition (basic and acidic residues). Low complexity predominate over residues 590 to 601 (SNMELELNSSSS). Residues 603–614 (APKKNRLRRKSS) show a composition bias toward basic residues. Phosphoserine occurs at positions 692, 712, and 751. The residue at position 987 (Ser-987) is a Phosphoserine; by CHEK2. At Ser-1008 the chain carries Phosphoserine. A Glycyl lysine isopeptide (Lys-Gly) (interchain with G-Cter in SUMO2) cross-link involves residue Lys-1079. Disordered regions lie at residues 1134–1154 (PEQP…PDDL) and 1183–1221 (QSGE…SSEE). Composition is skewed to polar residues over residues 1138–1148 (MGSSRSSQVCS) and 1183–1194 (QSGEFSRSPSPS). 7 positions are modified to phosphoserine: Ser-1144, Ser-1190, Ser-1192, Ser-1212, Ser-1218, Ser-1219, and Ser-1281. Residues 1315–1325 (DPFSMFDPTSK) show a composition bias toward polar residues. Disordered stretches follow at residues 1315 to 1401 (DPFS…TQQR) and 1419 to 1504 (EAVL…PSQS). Basic and acidic residues predominate over residues 1329-1343 (HQSENLDVLNDKELV). Residues Ser-1331, Ser-1344, and Ser-1391 each carry the phosphoserine modification. Over residues 1344–1369 (SDDDDEREPGLEEDSPQEEQSVDSDL) the composition is skewed to acidic residues. Over residues 1377-1401 (ESETSLSEDCSRLSSQSDILTTQQR) the composition is skewed to polar residues. Thr-1398 bears the Phosphothreonine mark. The segment at 1401–1428 (RDTMQDNLIKLQQEMAELEAVLEQHESQ) is interaction with PALB2. 2 positions are modified to phosphoserine: Ser-1427 and Ser-1460. Over residues 1465–1491 (DSPISQNPESLSTDKFQVFLDSSTSKN) the composition is skewed to polar residues. Ser-1527 and Ser-1545 each carry phosphoserine. Residues 1570-1590 (GISLFSDDPESDPSSHRASEL) form a disordered region. 2 consecutive BRCT domains span residues 1652-1739 (RISM…DFEV) and 1764-1863 (QDRK…TYLI). The disordered stretch occupies residues 1743 to 1764 (VVNGRNHQGPKRARESQDRESQ). Over residues 1754-1764 (RARESQDRESQ) the composition is skewed to basic and acidic residues.

As to quaternary structure, heterodimer with BARD1. Part of the BRCA1-associated genome surveillance complex (BASC), which contains BRCA1, MSH2, MSH6, MLH1, ATM, BLM, PMS2 and the MRE11-RAD50-NBN protein (MRN) complex. This association could be a dynamic process changing throughout the cell cycle and within subnuclear domains. Component of the BRCA1-A complex, at least composed of BRCA1, BARD1, UIMC1/RAP80, ABRAXAS1, BRCC3/BRCC36, BABAM2 and BABAM1/NBA1. Interacts (via the BRCT domains) with ABRAXAS1 (phosphorylated form); this is important for recruitment to sites of DNA damage. Can form a heterotetramer with two molecules of ABRAXAS1 (phosphorylated form). Component of the BRCA1-RBBP8 complex. Interacts (via the BRCT domains) with RBBP8 ('Ser-327' phosphorylated form); the interaction ubiquitinates RBBP8, regulates CHEK1 activation, and involves RBBP8 in BRCA1-dependent G2/M checkpoint control on DNA damage. Associates with RNA polymerase II holoenzyme. Interacts with SMC1A, NELFB, DCLRE1C, CLSPN. CHEK1, CHEK2, BAP1, BRCC3, UBXN1 and PCLAF. Interacts (via BRCT domains) with BRIP1 (phosphorylated form). Interacts with FANCD2 (ubiquitinated form). Interacts with H2AX (phosphorylated on 'Ser-140'). Interacts (via the BRCT domains) with ACACA (phosphorylated form); the interaction prevents dephosphorylation of ACACA. Part of a BRCA complex containing BRCA1, BRCA2 and PALB2. Interacts directly with PALB2; the interaction is essential for its function in HRR. Interacts directly with BRCA2; the interaction occurs only in the presence of PALB2 which serves as the bridging protein. Interacts (via the BRCT domains) with LMO4; the interaction represses the transcriptional activity of BRCA1. Interacts (via the BRCT domains) with CCAR2 (via N-terminus); the interaction represses the transcriptional activator activity of BRCA1. Interacts with EXD2. Interacts (via C-terminus) with DHX9; this interaction is direct and links BRCA1 to the RNA polymerase II holoenzyme. Interacts with DNA helicase ZGRF1; the interaction is increased following DNA damage induction. In terms of processing, phosphorylated in response to IR, UV, and various stimuli that cause checkpoint activation, probably by ATM or ATR. Phosphorylation at Ser-987 by CHEK2 regulates mitotic spindle assembly. Phosphorylation by AURKA regulates centrosomal microtubule nucleation. Autoubiquitinated, undergoes 'Lys-6'-linked polyubiquitination. 'Lys-6'-linked polyubiquitination does not promote degradation.

The protein resides in the nucleus. The protein localises to the chromosome. It localises to the cytoplasm. It catalyses the reaction S-ubiquitinyl-[E2 ubiquitin-conjugating enzyme]-L-cysteine + [acceptor protein]-L-lysine = [E2 ubiquitin-conjugating enzyme]-L-cysteine + N(6)-ubiquitinyl-[acceptor protein]-L-lysine.. It functions in the pathway protein modification; protein ubiquitination. Functionally, E3 ubiquitin-protein ligase that specifically mediates the formation of 'Lys-6'-linked polyubiquitin chains and plays a central role in DNA repair by facilitating cellular responses to DNA damage. It is unclear whether it also mediates the formation of other types of polyubiquitin chains. The BRCA1-BARD1 heterodimer coordinates a diverse range of cellular pathways such as DNA damage repair, ubiquitination and transcriptional regulation to maintain genomic stability. Regulates centrosomal microtubule nucleation. Required for appropriate cell cycle arrests after ionizing irradiation in both the S-phase and the G2 phase of the cell cycle. Required for FANCD2 targeting to sites of DNA damage. Inhibits lipid synthesis by binding to inactive phosphorylated ACACA and preventing its dephosphorylation. Contributes to homologous recombination repair (HRR) via its direct interaction with PALB2, fine-tunes recombinational repair partly through its modulatory role in the PALB2-dependent loading of BRCA2-RAD51 repair machinery at DNA breaks. Component of the BRCA1-RBBP8 complex which regulates CHEK1 activation and controls cell cycle G2/M checkpoints on DNA damage via BRCA1-mediated ubiquitination of RBBP8. Acts as a transcriptional activator. This Canis lupus familiaris (Dog) protein is Breast cancer type 1 susceptibility protein homolog (BRCA1).